The sequence spans 240 residues: MSDIKDGNNDHLVQSDDPEHPANLIPALCRNFYSHGWVTGTGGGASIKRDNHIFIAPSGVQKELIQPHNIFVLSYPTPKYPPSARQYIRKPLKLNPSACTPLFLAAFERGAGCCIHTHSQWAVLVTLLVEREKGPEGCFEISNIEQIKGIPRGKGKGMMGFYDTLKIPIIENTAFEEDLTQSLEEAMEMYPDTYAVLVRRHGIYVWGDDVAKAKTQCESLDYLFQLAVEMHRLGLPWVKS.

Cys99 contacts substrate. Zn(2+) contacts are provided by His116 and His118. The active-site Proton donor/acceptor is the Glu145. His201 is a binding site for Zn(2+).

Belongs to the aldolase class II family. MtnB subfamily. It depends on Zn(2+) as a cofactor.

Its subcellular location is the cytoplasm. The enzyme catalyses 5-(methylsulfanyl)-D-ribulose 1-phosphate = 5-methylsulfanyl-2,3-dioxopentyl phosphate + H2O. Its pathway is amino-acid biosynthesis; L-methionine biosynthesis via salvage pathway; L-methionine from S-methyl-5-thio-alpha-D-ribose 1-phosphate: step 2/6. Its function is as follows. Catalyzes the dehydration of methylthioribulose-1-phosphate (MTRu-1-P) into 2,3-diketo-5-methylthiopentyl-1-phosphate (DK-MTP-1-P). The sequence is that of Methylthioribulose-1-phosphate dehydratase from Paracoccidioides brasiliensis (strain Pb03).